The following is a 417-amino-acid chain: UDP-N-acetylglucosamine 1-carboxyvinyltransferase (417 aa).

22–23 provides a ligand contact to phosphoenolpyruvate; that stretch reads KN. A UDP-N-acetyl-alpha-D-glucosamine-binding site is contributed by Arg-93. The Proton donor role is filled by Cys-117. A 2-(S-cysteinyl)pyruvic acid O-phosphothioketal modification is found at Cys-117. Residues 122 to 126, Asp-304, and Ile-326 each bind UDP-N-acetyl-alpha-D-glucosamine; that span reads RPVDQ.

The protein belongs to the EPSP synthase family. MurA subfamily.

The protein resides in the cytoplasm. It carries out the reaction phosphoenolpyruvate + UDP-N-acetyl-alpha-D-glucosamine = UDP-N-acetyl-3-O-(1-carboxyvinyl)-alpha-D-glucosamine + phosphate. The protein operates within cell wall biogenesis; peptidoglycan biosynthesis. Cell wall formation. Adds enolpyruvyl to UDP-N-acetylglucosamine. The sequence is that of UDP-N-acetylglucosamine 1-carboxyvinyltransferase from Neisseria meningitidis serogroup B (strain ATCC BAA-335 / MC58).